The chain runs to 439 residues: GTPase Obg (439 aa).

Positions 1 to 159 constitute an Obg domain; sequence MAFVDQAQIE…RNLKLELKVL (159 aa). The OBG-type G domain occupies 160–336; sequence ADVGLVGFPS…LMRLTADMLA (177 aa). GTP is bound by residues 166–173, 191–195, 213–216, 283–286, and 317–319; these read GFPSAGKS, FTTLS, DLPG, TKMD, and SSI. Mg(2+)-binding residues include S173 and T193. The segment at 338 to 357 is disordered; the sequence is APAPESYRPETKNDTSEKSY. Positions 344-354 are enriched in basic and acidic residues; sequence YRPETKNDTSE. The OCT domain maps to 358–439; it reads TFKPETHDFT…NSDFVFEFSE (82 aa).

The protein belongs to the TRAFAC class OBG-HflX-like GTPase superfamily. OBG GTPase family. In terms of assembly, monomer. Mg(2+) is required as a cofactor.

It localises to the cytoplasm. In terms of biological role, an essential GTPase which binds GTP, GDP and possibly (p)ppGpp with moderate affinity, with high nucleotide exchange rates and a fairly low GTP hydrolysis rate. Plays a role in control of the cell cycle, stress response, ribosome biogenesis and in those bacteria that undergo differentiation, in morphogenesis control. This is GTPase Obg from Leuconostoc mesenteroides subsp. mesenteroides (strain ATCC 8293 / DSM 20343 / BCRC 11652 / CCM 1803 / JCM 6124 / NCDO 523 / NBRC 100496 / NCIMB 8023 / NCTC 12954 / NRRL B-1118 / 37Y).